The primary structure comprises 185 residues: Anaphase-promoting complex subunit 10 (185 aa).

Position 2 is an N-acetylthreonine (Thr-2). A DOC domain is found at 2–185 (TTPNKTPPGA…IDFMMYRSIR (184 aa)). Lys-169 carries the post-translational modification N6-acetyllysine.

The protein belongs to the APC10 family. In terms of assembly, the mammalian APC/C is composed at least of 14 distinct subunits ANAPC1, ANAPC2, CDC27/APC3, ANAPC4, ANAPC5, CDC16/APC6, ANAPC7, CDC23/APC8, ANAPC10, ANAPC11, CDC26/APC12, ANAPC13, ANAPC15 and ANAPC16 that assemble into a complex of at least 19 chains with a combined molecular mass of around 1.2 MDa; APC/C interacts with FZR1 and FBXO5. The C-terminus of APC10 binds to CDC27/APC3. Interacts with PIWIL1; interaction only takes place when PIWIL1 binds piRNA. Interacts with FBXO43; the interaction is direct.

Its pathway is protein modification; protein ubiquitination. Functionally, component of the anaphase promoting complex/cyclosome (APC/C), a cell cycle-regulated E3 ubiquitin ligase that controls progression through mitosis and the G1 phase of the cell cycle. The APC/C complex acts by mediating ubiquitination and subsequent degradation of target proteins: it mainly mediates the formation of 'Lys-11'-linked polyubiquitin chains and, to a lower extent, the formation of 'Lys-48'- and 'Lys-63'-linked polyubiquitin chains. The APC/C complex catalyzes assembly of branched 'Lys-11'-/'Lys-48'-linked branched ubiquitin chains on target proteins. This is Anaphase-promoting complex subunit 10 (Anapc10) from Mus musculus (Mouse).